The sequence spans 285 residues: ATP phosphoribosyltransferase (285 aa).

Belongs to the ATP phosphoribosyltransferase family. Long subfamily. The cofactor is Mg(2+).

The protein resides in the cytoplasm. It catalyses the reaction 1-(5-phospho-beta-D-ribosyl)-ATP + diphosphate = 5-phospho-alpha-D-ribose 1-diphosphate + ATP. The protein operates within amino-acid biosynthesis; L-histidine biosynthesis; L-histidine from 5-phospho-alpha-D-ribose 1-diphosphate: step 1/9. Its activity is regulated as follows. Feedback inhibited by histidine. Its function is as follows. Catalyzes the condensation of ATP and 5-phosphoribose 1-diphosphate to form N'-(5'-phosphoribosyl)-ATP (PR-ATP). Has a crucial role in the pathway because the rate of histidine biosynthesis seems to be controlled primarily by regulation of HisG enzymatic activity. The sequence is that of ATP phosphoribosyltransferase from Streptomyces avermitilis (strain ATCC 31267 / DSM 46492 / JCM 5070 / NBRC 14893 / NCIMB 12804 / NRRL 8165 / MA-4680).